We begin with the raw amino-acid sequence, 449 residues long: MNAALNQWKDTHAARLSQYSAVRVSGRVSAVRGILLECKIPAAKVGDLCEVSKADGSFLLAEIVGFTQECTLLSALGAPDGIQVGAPIRPLGIAHRIGVDDTLLGCVLDGFGRPLLGDCLGAFAGPDDRRDTLPVIADALPPTQRPRITRSLPTGIRAIDSAILLGEGQRVGLFAGAGCGKTTLMAELARNMDCDVIVFGLIGERGRELREFLDHELDETLRARSVLVCATSDRSSMERARAAFTATAIAEAFRARGQKVLLLLDSLTRFARAQREIGIASGEPLGRGGLPPSVYTLLPRLVERAGMSENGSITALYTVLIEQDSMNDPVADEVRSLLDGHIVLSRKLAERGHYPAIDVSASISRILSNVTGRDHQRANNRLRQLLAAYKQVEMLLRLGEYQAGADPVTDCAVQLNDAINAFLRQDLREPVPLQETLDGLLRITSQLPE.

Residue 178-183 participates in ATP binding; the sequence is GCGKTT.

This sequence belongs to the ATPase alpha/beta chains family. T3SS ATPase subfamily. In terms of assembly, the core secretion machinery of the T3SS is composed of approximately 20 different proteins, including cytoplasmic components, a base, an export apparatus and a needle. This subunit is part of the cytosolic complex. Forms homododecamers.

The protein resides in the cytoplasm. The catalysed reaction is ATP + H2O + cellular proteinSide 1 = ADP + phosphate + cellular proteinSide 2.. In terms of biological role, ATPase component of the type III secretion system (T3SS), also called injectisome, which is used to inject bacterial effector proteins into eukaryotic host cells. Acts as a molecular motor to provide the energy that is required for the export of proteins. Required for type III secretion apparatus (T3SA) formation, proper protein secretion, host cell invasion and virulence. May play a critical role in T3SS substrate recognition, disassembly of the effector/chaperone complex and unfolding of the effector in an ATP-dependent manner prior to secretion. This Pseudomonas syringae pv. tomato (strain ATCC BAA-871 / DC3000) protein is Type 3 secretion system ATPase.